A 307-amino-acid chain; its full sequence is Methionyl-tRNA formyltransferase (307 aa).

109-112 (SMLP) is a (6S)-5,6,7,8-tetrahydrofolate binding site.

Belongs to the Fmt family.

The enzyme catalyses L-methionyl-tRNA(fMet) + (6R)-10-formyltetrahydrofolate = N-formyl-L-methionyl-tRNA(fMet) + (6S)-5,6,7,8-tetrahydrofolate + H(+). Functionally, attaches a formyl group to the free amino group of methionyl-tRNA(fMet). The formyl group appears to play a dual role in the initiator identity of N-formylmethionyl-tRNA by promoting its recognition by IF2 and preventing the misappropriation of this tRNA by the elongation apparatus. The sequence is that of Methionyl-tRNA formyltransferase from Orientia tsutsugamushi (strain Boryong) (Rickettsia tsutsugamushi).